We begin with the raw amino-acid sequence, 141 residues long: HTH-type transcriptional repressor NsrR (141 aa).

The HTH rrf2-type domain occupies 2–129 (QLTSFTDYGL…DNYTLADLVE (128 aa)). The H-T-H motif DNA-binding region spans 28–51 (ISEVTEVYGVSRNHMVKIINQLSR). Residues C91, C96, and C102 each contribute to the [2Fe-2S] cluster site.

[2Fe-2S] cluster is required as a cofactor.

Functionally, nitric oxide-sensitive repressor of genes involved in protecting the cell against nitrosative stress. May require iron for activity. This chain is HTH-type transcriptional repressor NsrR, found in Klebsiella pneumoniae subsp. pneumoniae (strain ATCC 700721 / MGH 78578).